A 311-amino-acid polypeptide reads, in one-letter code: Malate dehydrogenase (311 aa).

NAD(+) contacts are provided by residues 7–13 and D34; that span reads GAAGGIG. Substrate contacts are provided by R81 and R87. NAD(+) contacts are provided by residues N94 and 117–119; that span reads ITN. Residues N119 and R153 each contribute to the substrate site. H177 functions as the Proton acceptor in the catalytic mechanism. M227 contributes to the NAD(+) binding site.

Belongs to the LDH/MDH superfamily. MDH type 1 family. As to quaternary structure, homodimer.

It carries out the reaction (S)-malate + NAD(+) = oxaloacetate + NADH + H(+). In terms of biological role, catalyzes the reversible oxidation of malate to oxaloacetate. This chain is Malate dehydrogenase, found in Shewanella piezotolerans (strain WP3 / JCM 13877).